Here is a 256-residue protein sequence, read N- to C-terminus: Thiazole synthase (256 aa).

The Schiff-base intermediate with DXP role is filled by Lys95. 1-deoxy-D-xylulose 5-phosphate contacts are provided by residues Gly156, 182-183, and 204-205; these read AG and NT.

Belongs to the ThiG family. In terms of assembly, homotetramer. Forms heterodimers with either ThiH or ThiS.

It localises to the cytoplasm. The catalysed reaction is [ThiS sulfur-carrier protein]-C-terminal-Gly-aminoethanethioate + 2-iminoacetate + 1-deoxy-D-xylulose 5-phosphate = [ThiS sulfur-carrier protein]-C-terminal Gly-Gly + 2-[(2R,5Z)-2-carboxy-4-methylthiazol-5(2H)-ylidene]ethyl phosphate + 2 H2O + H(+). Its pathway is cofactor biosynthesis; thiamine diphosphate biosynthesis. Functionally, catalyzes the rearrangement of 1-deoxy-D-xylulose 5-phosphate (DXP) to produce the thiazole phosphate moiety of thiamine. Sulfur is provided by the thiocarboxylate moiety of the carrier protein ThiS. In vitro, sulfur can be provided by H(2)S. The protein is Thiazole synthase of Escherichia coli O17:K52:H18 (strain UMN026 / ExPEC).